Reading from the N-terminus, the 585-residue chain is FAD-linked oxidoreductase apf9 (585 aa).

Positions 1–19 (MKPHTVSLVLSNLASLAAA) are cleaved as a signal peptide. 3 N-linked (GlcNAc...) asparagine glycosylation sites follow: N40, N92, and N117. The FAD-binding PCMH-type domain occupies 108–294 (IGNSPVYVVN…TEITVKTYPT (187 aa)). H145 bears the Pros-8alpha-FAD histidine mark. Residues N352, N412, and N495 are each glycosylated (N-linked (GlcNAc...) asparagine).

Belongs to the oxygen-dependent FAD-linked oxidoreductase family. Requires FAD as cofactor.

Its pathway is secondary metabolite biosynthesis. Functionally, FAD-linked oxidoreductase; part of the gene cluster that mediates the biosynthesis of the cyclic tetrapeptide apicidin F (APF). The non-ribosomal peptide synthetase apf1 incorporates four different amino acids to produce apicidin F: L-phenylalanine, D-pipecolic acid (D-pip), N-methoxy-L-tryptophan and L-2-aminooctanedioic acid. L-Phenylalanine is the only proteinogenic amino acid directly used by apf1. The 3 other apf1 substrates are non-proteinogenic and have to be modified by other enzymes of the cluster. Lysine is converted to delta-1-pyrroline-5-carboxylate (P5C) which is reduced to L-pipecolic acid (L-pip) by apf3. L-pip is epimerized to D-pip, probably by apf1 activity, prior to incorporation. L-Tryptophan is N-oxidyzed by one of the cytochrome P450 monooxygenases (apf7 or apf8), and further methylated at the hydroxy group by the O-methyltransferase apf6 to yield N-methoxy-L-tryptophan. The synthesis of the fourth apf1 substrate is more complex. The fatty acid synthase apf5 is involved in the synthesis of the octanoic acid backbone of L-2-aminooctanedioic acid by fixing one acetyl-CoA unit and three malonyl-CoA units. Then one of the cytochrome P450 monooxygenases (apf7 or apf8) may oxidize this backbone to 2-oxooctanoic acid. The aminotransferase apf4 is predicted to catalyze the exchange of the keto group with an amino group. The next step would be the oxidation of 2-aminooctanoic acid by one of the cytochrome P450 monooxygenases (apf7 or apf8). The last step is the oxidation of 2-amino-8-hydroxyoctanoic acid to 2-aminooctanedioic acid is catalyzed by the FAD-dependent monooxygenase apf9. The chain is FAD-linked oxidoreductase apf9 from Gibberella fujikuroi (strain CBS 195.34 / IMI 58289 / NRRL A-6831) (Bakanae and foot rot disease fungus).